The following is a 681-amino-acid chain: Mating-type protein beta1-1 (681 aa).

A DNA-binding region (homeobox; TALE-type) is located at residues 165 to 227; sequence DKNEPTSPTP…DARRRIGWNE (63 aa). Positions 307–318 are enriched in basic and acidic residues; sequence LKNDEARRKREA. 3 disordered regions span residues 307–341, 353–381, and 394–466; these read LKND…SPAS, AIDS…SPLC, and SPVK…SDPF. Residues 413–430 show a composition bias toward low complexity; the sequence is TSAAPSPQPSLLPKLTPT.

Belongs to the TALE/M-ATYP homeobox family. In terms of assembly, may dimerize.

It is found in the nucleus. Has a major regulatory role in sexual and asexual development. It may bind DNA itself or it may have a role in preventing DNA-binding of another protein. In Coprinopsis cinerea (Inky cap fungus), this protein is Mating-type protein beta1-1.